Here is a 480-residue protein sequence, read N- to C-terminus: uncharacterized protein (480 aa).

Residues 16–46 (CDRCRRRKIRCTGSDIPGQPCLACQKAHADC) constitute a DNA-binding region (zn(2)-C6 fungal-type). Residues 298 to 307 (SFGASVSPKS) are compositionally biased toward low complexity. The interval 298-325 (SFGASVSPKSTPGSNSTGAAVDTNSVHS) is disordered. Residues 308 to 325 (TPGSNSTGAAVDTNSVHS) show a composition bias toward polar residues.

It localises to the cytoplasm. It is found in the nucleus. This is an uncharacterized protein from Schizosaccharomyces pombe (strain 972 / ATCC 24843) (Fission yeast).